Reading from the N-terminus, the 417-residue chain is Phosphoglycerate kinase 1 (417 aa).

An N-acetylserine modification is found at S2. Phosphoserine is present on residues S2 and S4. The segment at 2–186 (SLSNKLTLDK…VGVNLPQKAG (185 aa)) is globular domain-1. The residue at position 6 (K6) is an N6-succinyllysine. At K11 the chain carries N6-acetyllysine. Positions 23, 24, 25, 26, 38, and 39 each coordinate (2R)-3-phosphoglycerate. Residues 38 to 43 (QRIKAA) are mitochondrial targeting region exposed following cis-trans isomerization by PIN1 and recognized by the TOM complex for mitochondrial translocation of the protein. K48 carries the post-translational modification N6-acetyllysine; alternate. K48 is modified (N6-succinyllysine; alternate). Residues S62, H63, G65, and R66 each contribute to the (2R)-3-phosphoglycerate site. K75 carries the post-translational modification N6-acetyllysine. Y76 carries the phosphotyrosine modification. 2 positions are modified to N6-acetyllysine: K86 and K91. K97 is subject to N6-acetyllysine; alternate. K97 bears the N6-(2-hydroxyisobutyryl)lysine; alternate mark. The (2R)-3-phosphoglycerate site is built by L122 and R123. K131 carries the N6-acetyllysine; alternate modification. An N6-malonyllysine; alternate modification is found at K131. At K146 the chain carries N6-acetyllysine. H170 and R171 together coordinate (2R)-3-phosphoglycerate. Residues 187–190 (GFLM) form a linker region. K191 bears the N6-succinyllysine mark. A globular domain-2 region spans residues 191–417 (KKELNYFAKA…LPGVDALSNV (227 aa)). Phosphotyrosine is present on Y196. The residue at position 199 (K199) is an N6-acetyllysine. Phosphoserine is present on S203. ADP is bound at residue G214. A CDP-binding site is contributed by G214. Positions 215 and 216 each coordinate AMP. A215 contributes to the ATP binding site. A215 contacts Mg(2+). K216 carries the N6-(2-hydroxyisobutyryl)lysine modification. The Mg(2+) site is built by A218 and D219. D219 contacts CDP. AMP is bound at residue K220. K220 provides a ligand contact to ATP. Position 220 is an N6-(2-hydroxyisobutyryl)lysine (K220). G238 provides a ligand contact to ADP. G238 contacts CDP. Residue G239 participates in AMP binding. G239 lines the ATP pocket. An N6-acetyllysine mark is found at K267 and K291. G313 is an AMP binding site. Residue G313 coordinates ATP. K323 is subject to N6-(2-hydroxyisobutyryl)lysine. Positions 338, 340, and 343 each coordinate CDP. Residue F343 coordinates ADP. E344 contributes to the AMP binding site. E344 provides a ligand contact to ATP. K361 bears the N6-acetyllysine mark. The ATP site is built by D375 and T376. D375 lines the Mg(2+) pocket. The segment at 406-417 (KVLPGVDALSNV) is associated with globular domain 1.

This sequence belongs to the phosphoglycerate kinase family. As to quaternary structure, monomer. Interacts with kinase MAPK1/ERK2; the interaction is direct, occurs under hypoxic conditions, and promotes its interaction with PIN1. Interacts with peptidyl-prolyl cis-trans isomerase PIN1; the interaction is direct, occurs under hypoxic conditions, and targets the protein to the mitochondrion by promoting interactions with the TOM complex. Interacts with mitochondrial circRNA mcPGK1 (via its 2nd stem-loop); the interaction is direct and targets the protein to the mitochondrion by promoting interactions with the TOM complex. Interacts with pyruvate dehydrogenase kinase PDK1; the interaction is direct, occurs under hypoxic conditions and leads to PDK1-mediated inhibition of pyruvate dehydrogenase complex activity. Requires Mg(2+) as cofactor. Phosphorylated at Ser-203 by MAPK1/ERK2 under hypoxic conditions, which promotes its mitochondrial targeting.

It localises to the cytoplasm. It is found in the cytosol. The protein localises to the mitochondrion matrix. The catalysed reaction is (2R)-3-phosphoglycerate + ATP = (2R)-3-phospho-glyceroyl phosphate + ADP. The enzyme catalyses L-seryl-[protein] + ATP = O-phospho-L-seryl-[protein] + ADP + H(+). The protein operates within carbohydrate degradation; glycolysis; pyruvate from D-glyceraldehyde 3-phosphate: step 2/5. Its function is as follows. Catalyzes one of the two ATP producing reactions in the glycolytic pathway via the reversible conversion of 1,3-diphosphoglycerate to 3-phosphoglycerate. Both L- and D- forms of purine and pyrimidine nucleotides can be used as substrates, but the activity is much lower on pyrimidines. In addition to its role as a glycolytic enzyme, it seems that PGK-1 acts as a polymerase alpha cofactor protein (primer recognition protein). Acts as a protein kinase when localized to the mitochondrion where it phosphorylates pyruvate dehydrogenase kinase PDK1 to inhibit pyruvate dehydrogenase complex activity and suppress the formation of acetyl-coenzyme A from pyruvate, and consequently inhibit oxidative phosphorylation and promote glycolysis. May play a role in sperm motility. The chain is Phosphoglycerate kinase 1 (PGK1) from Equus caballus (Horse).